The following is a 352-amino-acid chain: 7,8-didemethyl-8-hydroxy-5-deazariboflavin synthase (352 aa).

The 241-residue stretch at Ile-35 to Asn-275 folds into the Radical SAM core domain. [4Fe-4S] cluster is bound by residues Cys-49, Cys-53, and Cys-56.

Belongs to the radical SAM superfamily. CofG family. Consists of two subunits, CofG and CofH. [4Fe-4S] cluster serves as cofactor.

The enzyme catalyses 5-amino-5-(4-hydroxybenzyl)-6-(D-ribitylimino)-5,6-dihydrouracil + S-adenosyl-L-methionine = 7,8-didemethyl-8-hydroxy-5-deazariboflavin + 5'-deoxyadenosine + L-methionine + NH4(+) + H(+). Its pathway is cofactor biosynthesis; coenzyme F0 biosynthesis. Its function is as follows. Catalyzes the radical-mediated synthesis of 7,8-didemethyl-8-hydroxy-5-deazariboflavin from 5-amino-5-(4-hydroxybenzyl)-6-(D-ribitylimino)-5,6-dihydrouracil. This chain is 7,8-didemethyl-8-hydroxy-5-deazariboflavin synthase, found in Methanococcus maripaludis (strain C5 / ATCC BAA-1333).